The following is a 299-amino-acid chain: Taste receptor type 2 member 5 (299 aa).

Residue methionine 1 is a topological domain, extracellular. The helical transmembrane segment at 2 to 22 (LSAGLGLLMLVAVIEFLIGLI) threads the bilayer. At 23-45 (GNGILVVWSLREWIRKFSWSSYN) the chain is on the cytoplasmic side. A helical transmembrane segment spans residues 46-66 (LIILGLAGCRFLLQWLIILDL). Residues 67–82 (SLFPLFQSSSWLRYLN) lie on the Extracellular side of the membrane. The helical transmembrane segment at 83–103 (VFWVLVSQASLWFATFLSVFY) threads the bilayer. Residues 104–127 (CKKITTFDRPAYLWLKQRAYNLSL) are Cytoplasmic-facing. A helical membrane pass occupies residues 128–148 (WCLLGYFIISLLLTVQVGLTV). Topologically, residues 149-175 (HHPPQGNSSIRYPFEHWQYLYVFQLNS) are extracellular. The N-linked (GlcNAc...) asparagine glycan is linked to asparagine 155. Residues 176–196 (GSYLPLMVFLVSSGMLIISLY) traverse the membrane as a helical segment. Residues 197–223 (THHKKMKVHSAGRRDARAKAHITALKS) lie on the Cytoplasmic side of the membrane. Residues 224–244 (LGCFLLLHLVYIVASPFSITS) traverse the membrane as a helical segment. The Extracellular portion of the chain corresponds to 245-253 (KTYPPDLTS). The helical transmembrane segment at 254–274 (VFIWETLMAAYPSLHSLMLIM) threads the bilayer. At 275-299 (GIPRVKQTCQKILWKTVCARRCWGP) the chain is on the cytoplasmic side.

This sequence belongs to the G-protein coupled receptor T2R family.

Its subcellular location is the membrane. In terms of biological role, receptor that may play a role in the perception of bitterness and is gustducin-linked. May play a role in sensing the chemical composition of the gastrointestinal content. The activity of this receptor may stimulate alpha gustducin, mediate PLC-beta-2 activation and lead to the gating of TRPM5. In Papio hamadryas (Hamadryas baboon), this protein is Taste receptor type 2 member 5 (TAS2R5).